Reading from the N-terminus, the 96-residue chain is Large ribosomal subunit protein bL27 (96 aa).

Positions 1-10 (MLLKLNIQLF) are excised as a propeptide.

The protein belongs to the bacterial ribosomal protein bL27 family. In terms of processing, the N-terminus is cleaved by ribosomal processing cysteine protease Prp.

The chain is Large ribosomal subunit protein bL27 from Phytoplasma mali (strain AT).